The following is a 167-amino-acid chain: ATP synthase subunit delta, mitochondrial (167 aa).

Residues 1–28 constitute a mitochondrion transit peptide; the sequence is MFRLSNYMLRKSQFPQGLVRAPFGIRGY.

Belongs to the ATPase epsilon chain family. As to quaternary structure, F-type ATPases have 2 components, CF(1) - the catalytic core - and CF(0) - the membrane proton channel. CF(1) has five subunits: alpha(3), beta(3), gamma(1), delta(1), epsilon(1). CF(0) has three main subunits: a, b and c.

The protein resides in the mitochondrion. The protein localises to the mitochondrion inner membrane. Its function is as follows. Mitochondrial membrane ATP synthase (F(1)F(0) ATP synthase or Complex V) produces ATP from ADP in the presence of a proton gradient across the membrane which is generated by electron transport complexes of the respiratory chain. F-type ATPases consist of two structural domains, F(1) - containing the extramembraneous catalytic core, and F(0) - containing the membrane proton channel, linked together by a central stalk and a peripheral stalk. During catalysis, ATP turnover in the catalytic domain of F(1) is coupled via a rotary mechanism of the central stalk subunits to proton translocation. Part of the complex F(1) domain and of the central stalk which is part of the complex rotary element. Rotation of the central stalk against the surrounding alpha(3)beta(3) subunits leads to hydrolysis of ATP in three separate catalytic sites on the beta subunits. This Schizosaccharomyces pombe (strain 972 / ATCC 24843) (Fission yeast) protein is ATP synthase subunit delta, mitochondrial (atp16).